The primary structure comprises 111 residues: Large ribosomal subunit protein uL24 (111 aa).

This sequence belongs to the universal ribosomal protein uL24 family. As to quaternary structure, part of the 50S ribosomal subunit.

In terms of biological role, one of two assembly initiator proteins, it binds directly to the 5'-end of the 23S rRNA, where it nucleates assembly of the 50S subunit. Its function is as follows. One of the proteins that surrounds the polypeptide exit tunnel on the outside of the subunit. The polypeptide is Large ribosomal subunit protein uL24 (Cytophaga hutchinsonii (strain ATCC 33406 / DSM 1761 / CIP 103989 / NBRC 15051 / NCIMB 9469 / D465)).